Reading from the N-terminus, the 468-residue chain is Argininosuccinate lyase (468 aa).

This sequence belongs to the lyase 1 family. Argininosuccinate lyase subfamily.

It localises to the cytoplasm. It catalyses the reaction 2-(N(omega)-L-arginino)succinate = fumarate + L-arginine. The protein operates within amino-acid biosynthesis; L-arginine biosynthesis; L-arginine from L-ornithine and carbamoyl phosphate: step 3/3. The protein is Argininosuccinate lyase of Gloeobacter violaceus (strain ATCC 29082 / PCC 7421).